Reading from the N-terminus, the 207-residue chain is Thymidylate kinase (207 aa).

7–14 provides a ligand contact to ATP; it reads GCEGSGKS.

It belongs to the thymidylate kinase family.

The catalysed reaction is dTMP + ATP = dTDP + ADP. Its function is as follows. Phosphorylation of dTMP to form dTDP in both de novo and salvage pathways of dTTP synthesis. This is Thymidylate kinase from Chlamydia caviae (strain ATCC VR-813 / DSM 19441 / 03DC25 / GPIC) (Chlamydophila caviae).